The chain runs to 132 residues: MSMTDPIADFLTRVRNANLARHEVVEAPASKIKKSIAEILKAEGFIRDFEYIDDNKQGVIRVFLKYGEDRNRVITGIQRISKPGLRKYAKAEELPKVLNGLGIAIISTSAGVITDKEARSKQVGGEVIAYVW.

The protein belongs to the universal ribosomal protein uS8 family. As to quaternary structure, part of the 30S ribosomal subunit. Contacts proteins S5 and S12.

In terms of biological role, one of the primary rRNA binding proteins, it binds directly to 16S rRNA central domain where it helps coordinate assembly of the platform of the 30S subunit. The polypeptide is Small ribosomal subunit protein uS8 (Leuconostoc mesenteroides subsp. mesenteroides (strain ATCC 8293 / DSM 20343 / BCRC 11652 / CCM 1803 / JCM 6124 / NCDO 523 / NBRC 100496 / NCIMB 8023 / NCTC 12954 / NRRL B-1118 / 37Y)).